Consider the following 343-residue polypeptide: Tetraacyldisaccharide 4'-kinase (343 aa).

Residue 51 to 58 coordinates ATP; sequence TVGGAGKT.

The protein belongs to the LpxK family.

It carries out the reaction a lipid A disaccharide + ATP = a lipid IVA + ADP + H(+). It functions in the pathway glycolipid biosynthesis; lipid IV(A) biosynthesis; lipid IV(A) from (3R)-3-hydroxytetradecanoyl-[acyl-carrier-protein] and UDP-N-acetyl-alpha-D-glucosamine: step 6/6. Its function is as follows. Transfers the gamma-phosphate of ATP to the 4'-position of a tetraacyldisaccharide 1-phosphate intermediate (termed DS-1-P) to form tetraacyldisaccharide 1,4'-bis-phosphate (lipid IVA). This is Tetraacyldisaccharide 4'-kinase from Xanthobacter autotrophicus (strain ATCC BAA-1158 / Py2).